Here is a 196-residue protein sequence, read N- to C-terminus: Translation machinery-associated protein 22 (196 aa).

The region spanning 97 to 168 (VIVKREARTK…EVVAYIHSLL (72 aa)) is the SUI1 domain.

This sequence belongs to the DENR family. As to quaternary structure, interacts with the 40S ribosomal subunit.

The protein localises to the cytoplasm. The chain is Translation machinery-associated protein 22 (TMA22) from Candida glabrata (strain ATCC 2001 / BCRC 20586 / JCM 3761 / NBRC 0622 / NRRL Y-65 / CBS 138) (Yeast).